The following is an 86-amino-acid chain: MAETHSLGTKILIKIIRLYQIMISPFIGARCRFVPTCSCYGIEALKTHGLLKGGWLTLKRVLKCHPLNAGGFDPVPPKTNNNDEKK.

The protein belongs to the UPF0161 family.

It localises to the cell inner membrane. Functionally, could be involved in insertion of integral membrane proteins into the membrane. The sequence is that of Putative membrane protein insertion efficiency factor from Haemophilus influenzae (strain 86-028NP).